An 874-amino-acid polypeptide reads, in one-letter code: Alanine--tRNA ligase (874 aa).

Zn(2+) is bound by residues histidine 562, histidine 566, cysteine 664, and histidine 668.

Belongs to the class-II aminoacyl-tRNA synthetase family. It depends on Zn(2+) as a cofactor.

The protein resides in the cytoplasm. It catalyses the reaction tRNA(Ala) + L-alanine + ATP = L-alanyl-tRNA(Ala) + AMP + diphosphate. Catalyzes the attachment of alanine to tRNA(Ala) in a two-step reaction: alanine is first activated by ATP to form Ala-AMP and then transferred to the acceptor end of tRNA(Ala). Also edits incorrectly charged Ser-tRNA(Ala) and Gly-tRNA(Ala) via its editing domain. This Shewanella oneidensis (strain ATCC 700550 / JCM 31522 / CIP 106686 / LMG 19005 / NCIMB 14063 / MR-1) protein is Alanine--tRNA ligase.